We begin with the raw amino-acid sequence, 169 residues long: Adenine phosphoribosyltransferase (169 aa).

Belongs to the purine/pyrimidine phosphoribosyltransferase family. As to quaternary structure, homodimer.

Its subcellular location is the cytoplasm. The enzyme catalyses AMP + diphosphate = 5-phospho-alpha-D-ribose 1-diphosphate + adenine. The protein operates within purine metabolism; AMP biosynthesis via salvage pathway; AMP from adenine: step 1/1. Functionally, catalyzes a salvage reaction resulting in the formation of AMP, that is energically less costly than de novo synthesis. The sequence is that of Adenine phosphoribosyltransferase from Mycoplasmopsis synoviae (strain 53) (Mycoplasma synoviae).